Reading from the N-terminus, the 400-residue chain is Argininosuccinate synthase (400 aa).

Residues 10-18 (AYSGGVDTS) and Ala38 each bind ATP. Tyr89 lines the L-citrulline pocket. Gly119 is an ATP binding site. Residues Thr121, Asn125, and Asp126 each coordinate L-aspartate. An L-citrulline-binding site is contributed by Asn125. L-citrulline contacts are provided by Arg129, Ser177, Ser186, Glu262, and Tyr274.

The protein belongs to the argininosuccinate synthase family. Type 1 subfamily. In terms of assembly, homotetramer.

It is found in the cytoplasm. The catalysed reaction is L-citrulline + L-aspartate + ATP = 2-(N(omega)-L-arginino)succinate + AMP + diphosphate + H(+). The protein operates within amino-acid biosynthesis; L-arginine biosynthesis; L-arginine from L-ornithine and carbamoyl phosphate: step 2/3. This Nostoc sp. (strain PCC 7120 / SAG 25.82 / UTEX 2576) protein is Argininosuccinate synthase.